Consider the following 844-residue polypeptide: MNIKFDMFVKDSNSIDSEELLNNYLTLNVVSQELLIQNAQKPLTPLSIEIGKTRTINKNIKSKLNFIMPSFCEYYELEGNYILYFKKLKIFEDFIIYKDQSIPISNQMEIKIGKGKVLVNGKKISIKDEEIKNNFIRDLNFLSSIKNFRNQYSHGNEIEAVESISKKENSINSLVIPTFIKFLGEIIIKTKDTIKFKNLMVLSDNFNILDDVIYQVENNELNLKNSKNSVVYKSIKKSIPIYLLSKVFEHTEFYILEKNNSILNFFCKKRIEDFNENSEDKEFNSTSENDSHESSIDLKCSSEVSQIKIERFHEYVSLFSKCISKNVDINHKNDKGDTALHNTIKNLKKESGPMVAALLSCGANANIRNNKHKVPLHFAIEFGDESIIKILLAFGAKPFLEDSISFSERDPGKIYKELNKSGQVLKILYEIGVITKLFDNFSVLQHVKTFILLEILFQNSMNILKSDIFSSILNNIFNQNIVRFKLIIQNLKEPPLSKFKKIEKFDRSELGKLIGKGANGKVYELHYNFGGVEKHCAVKEIKVDKYRVGAVLKEIESTALSQSPFTVGIYGYFEDEKNNFLYIFLEYCPNGNLFDIINKEKMKSFDEFFSYAFGVVHCTHDIHSNPKGALIHRDIKASNFLVDKNNLVKIGDFGTARFDCTLNLSSLKNGAGTVCFQAPEASRGKATIQSDIYSLGVVLFELCGAIPYKNYNYFFPFGDLKYLRVASAVSNYLRPILHPVIPQPLSDLIYSMLNHNEYDRPTSFEVFQKLKKVQEDYESNKEEWNSIFNTIDMKEDQQFHHERQEKVALMIKKKYLLTRPITESLVNHYDNIVFNIDYSISLNF.

2 ANK repeats span residues 335-367 and 371-400; these read KGDT…NANI and KHKV…KPFL. The Protein kinase domain occupies 508 to 773; sequence SELGKLIGKG…FEVFQKLKKV (266 aa). Residues 514–522 and Lys-539 contribute to the ATP site; that span reads IGKGANGKV. Catalysis depends on Asp-634, which acts as the Proton acceptor.

The protein belongs to the protein kinase superfamily. Ser/Thr protein kinase family.

The enzyme catalyses L-seryl-[protein] + ATP = O-phospho-L-seryl-[protein] + ADP + H(+). It carries out the reaction L-threonyl-[protein] + ATP = O-phospho-L-threonyl-[protein] + ADP + H(+). In Dictyostelium discoideum (Social amoeba), this protein is Probable serine/threonine-protein kinase DDB_G0267566.